Consider the following 192-residue polypeptide: uncharacterized protein (192 aa).

A helical; Signal-anchor membrane pass occupies residues 7 to 29 (FIHSISGGSSLLSASEVFASAFF). The helical transmembrane segment at 51–67 (YFLCVLVSTFLNSLVII) threads the bilayer.

It localises to the membrane. This is an uncharacterized protein from Saccharomyces cerevisiae (strain ATCC 204508 / S288c) (Baker's yeast).